A 284-amino-acid polypeptide reads, in one-letter code: Pantothenate synthetase (284 aa).

Met30–His37 contacts ATP. Residue His37 is the Proton donor of the active site. Gln61 is a binding site for (R)-pantoate. Beta-alanine is bound at residue Gln61. Gly149–Asp152 is an ATP binding site. Gln155 is a binding site for (R)-pantoate. ATP-binding positions include Val178 and Leu186–Arg189.

Belongs to the pantothenate synthetase family. As to quaternary structure, homodimer.

Its subcellular location is the cytoplasm. The catalysed reaction is (R)-pantoate + beta-alanine + ATP = (R)-pantothenate + AMP + diphosphate + H(+). Its pathway is cofactor biosynthesis; (R)-pantothenate biosynthesis; (R)-pantothenate from (R)-pantoate and beta-alanine: step 1/1. Its function is as follows. Catalyzes the condensation of pantoate with beta-alanine in an ATP-dependent reaction via a pantoyl-adenylate intermediate. This Cronobacter sakazakii (strain ATCC BAA-894) (Enterobacter sakazakii) protein is Pantothenate synthetase.